The chain runs to 140 residues: ATP synthase epsilon chain (140 aa).

It belongs to the ATPase epsilon chain family. As to quaternary structure, F-type ATPases have 2 components, CF(1) - the catalytic core - and CF(0) - the membrane proton channel. CF(1) has five subunits: alpha(3), beta(3), gamma(1), delta(1), epsilon(1). CF(0) has three main subunits: a, b and c.

It is found in the cell inner membrane. Functionally, produces ATP from ADP in the presence of a proton gradient across the membrane. This is ATP synthase epsilon chain from Sodalis glossinidius (strain morsitans).